A 302-amino-acid chain; its full sequence is Acetylglutamate kinase (302 aa).

Substrate contacts are provided by residues 73-74 (GG), arginine 95, and asparagine 200.

The protein belongs to the acetylglutamate kinase family. ArgB subfamily.

The protein localises to the cytoplasm. It catalyses the reaction N-acetyl-L-glutamate + ATP = N-acetyl-L-glutamyl 5-phosphate + ADP. It participates in amino-acid biosynthesis; L-arginine biosynthesis; N(2)-acetyl-L-ornithine from L-glutamate: step 2/4. Catalyzes the ATP-dependent phosphorylation of N-acetyl-L-glutamate. The polypeptide is Acetylglutamate kinase (Sphingopyxis alaskensis (strain DSM 13593 / LMG 18877 / RB2256) (Sphingomonas alaskensis)).